Here is an 88-residue protein sequence, read N- to C-terminus: Putative septation protein SpoVG (88 aa).

It belongs to the SpoVG family.

In terms of biological role, could be involved in septation. This chain is Putative septation protein SpoVG, found in Caldicellulosiruptor bescii (strain ATCC BAA-1888 / DSM 6725 / KCTC 15123 / Z-1320) (Anaerocellum thermophilum).